Here is a 429-residue protein sequence, read N- to C-terminus: G2/mitotic-specific cyclin-B1 (429 aa).

The tract at residues 71-114 is disordered; it reads TGKVSAKIPPPKPLEKVPPVSEPEVELAETHEPEPVMDEKLSPE. K73 bears the N6-acetyllysine mark. Positions 98–112 are enriched in basic and acidic residues; the sequence is AETHEPEPVMDEKLS. A Phosphoserine; by CDK1 modification is found at S122. S124 carries the phosphoserine modification. Phosphoserine; by PLK1 is present on S129. Phosphoserine is present on S143. Interaction with CDK2 stretches follow at residues 165–173 and 254–257; these read EYVKDIYAY and YEEM. Position 317 is a phosphothreonine (T317).

Belongs to the cyclin family. Cyclin AB subfamily. As to quaternary structure, interacts with the CDC2 protein kinase to form a serine/threonine kinase holoenzyme complex also known as maturation promoting factor (MPF). The cyclin subunit imparts substrate specificity to the complex. Binds HEI10. Interacts with catalytically active RALBP1 and CDC2 during mitosis to form an endocytotic complex during interphase. Interacts with CCNF; interaction is required for nuclear localization. Interacts with CDK5RAP3. Interacts with RFPL4A and UBE2A. Interacts with INCA1. Post-translationally, ubiquitinated by the SCF(NIPA) complex during interphase, leading to its destruction. Not ubiquitinated during G2/M phases. Phosphorylated by PLK1 at Ser-129 on centrosomes during prophase: phosphorylation by PLK1 does not cause nuclear import. Phosphorylation at Ser-143 was also reported to be mediated by PLK1 but Ser-129 seems to be the primary phosphorylation site.

The protein resides in the cytoplasm. The protein localises to the nucleus. It is found in the cytoskeleton. Its subcellular location is the microtubule organizing center. It localises to the centrosome. Its function is as follows. Essential for the control of the cell cycle at the G2/M (mitosis) transition. In Mesocricetus auratus (Golden hamster), this protein is G2/mitotic-specific cyclin-B1 (CCNB1).